Consider the following 188-residue polypeptide: Translation machinery-associated protein 22 (188 aa).

In terms of domain architecture, SUI1 spans 96–167 (VVIKRIERSK…GVEELITQML (72 aa)).

It belongs to the DENR family. As to quaternary structure, interacts with the 40S ribosomal subunit.

The protein resides in the cytoplasm. This is Translation machinery-associated protein 22 (TMA22) from Yarrowia lipolytica (strain CLIB 122 / E 150) (Yeast).